The chain runs to 224 residues: Peptidyl-prolyl cis-trans isomerase FKBP3 (224 aa).

A2 is modified (N-acetylalanine). Residue S36 is modified to Phosphoserine. Residues 89 to 102 (KLNEDKPKETKSEE) show a composition bias toward basic and acidic residues. Residues 89 to 113 (KLNEDKPKETKSEETLDEGPPKYTK) are disordered. The residue at position 99 (K99) is an N6-acetyllysine. The PPIase FKBP-type domain occupies 128-224 (GDVVHCWYTG…IFEVELVDID (97 aa)). S152 is modified (phosphoserine). The residue at position 170 (K170) is an N6-acetyllysine.

This sequence belongs to the FKBP-type PPIase family.

It is found in the nucleus. The catalysed reaction is [protein]-peptidylproline (omega=180) = [protein]-peptidylproline (omega=0). Inhibited preferentially by rapamycin over FK506. FK506- and rapamycin-binding proteins (FKBPs) constitute a family of receptors for the two immunosuppressants which inhibit T-cell proliferation by arresting two dinstinct cytoplasmic signal transmission pathways. PPIases accelerate the folding of proteins. The chain is Peptidyl-prolyl cis-trans isomerase FKBP3 (FKBP3) from Bos taurus (Bovine).